A 283-amino-acid chain; its full sequence is Probable replication-associated protein repA1 (283 aa).

The protein belongs to the IncFII RepA family.

In terms of biological role, this protein is essential for plasmid replication; it is involved in copy control functions. In Buchnera aphidicola subsp. Schizaphis graminum (strain Sg), this protein is Probable replication-associated protein repA1 (repA1).